The following is a 505-amino-acid chain: Glycerol kinase (505 aa).

Thr14 is an ADP binding site. ATP is bound by residues Thr14, Thr15, and Ser16. Thr14 provides a ligand contact to sn-glycerol 3-phosphate. Arg18 serves as a coordination point for ADP. Positions 84, 85, 136, and 246 each coordinate sn-glycerol 3-phosphate. Residues Arg84, Glu85, Tyr136, Asp246, and Gln247 each coordinate glycerol. Thr268 and Gly311 together coordinate ADP. ATP-binding residues include Thr268, Gly311, Gln315, and Gly412. ADP-binding residues include Gly412 and Asn416.

This sequence belongs to the FGGY kinase family.

The catalysed reaction is glycerol + ATP = sn-glycerol 3-phosphate + ADP + H(+). The protein operates within polyol metabolism; glycerol degradation via glycerol kinase pathway; sn-glycerol 3-phosphate from glycerol: step 1/1. Inhibited by fructose 1,6-bisphosphate (FBP). Its function is as follows. Key enzyme in the regulation of glycerol uptake and metabolism. Catalyzes the phosphorylation of glycerol to yield sn-glycerol 3-phosphate. This chain is Glycerol kinase, found in Vibrio parahaemolyticus serotype O3:K6 (strain RIMD 2210633).